The sequence spans 745 residues: Elongation factor G, mitochondrial (745 aa).

Positions 40 to 317 constitute a tr-type G domain; sequence ERIRNIGISA…AVLDYLPNPG (278 aa). Residues 49–56, 116–120, and 170–173 contribute to the GTP site; these read AHIDSGKT, DTPGH, and NKLD.

It belongs to the TRAFAC class translation factor GTPase superfamily. Classic translation factor GTPase family. EF-G/EF-2 subfamily.

The protein resides in the mitochondrion. It functions in the pathway protein biosynthesis; polypeptide chain elongation. Functionally, mitochondrial GTPase that catalyzes the GTP-dependent ribosomal translocation step during translation elongation. During this step, the ribosome changes from the pre-translocational (PRE) to the post-translocational (POST) state as the newly formed A-site-bound peptidyl-tRNA and P-site-bound deacylated tRNA move to the P and E sites, respectively. Catalyzes the coordinated movement of the two tRNA molecules, the mRNA and conformational changes in the ribosome. Essential during development as it acts as a retrograde signal from mitochondria to the nucleus to slow down cell proliferation if mitochondrial energy output is low. The protein is Elongation factor G, mitochondrial of Drosophila yakuba (Fruit fly).